The following is a 177-amino-acid chain: Archaemetzincin (177 aa).

Residue histidine 129 participates in Zn(2+) binding. Glutamate 130 functions as the Proton acceptor in the catalytic mechanism. Zn(2+) contacts are provided by histidine 133, histidine 139, cysteine 140, cysteine 145, cysteine 164, and cysteine 167.

The protein belongs to the peptidase M54 family. In terms of assembly, monomer. Requires Zn(2+) as cofactor.

Functionally, probable zinc metalloprotease whose natural substrate is unknown. This Sulfolobus acidocaldarius (strain ATCC 33909 / DSM 639 / JCM 8929 / NBRC 15157 / NCIMB 11770) protein is Archaemetzincin.